Here is a 1609-residue protein sequence, read N- to C-terminus: Chitin synthase 5 (1609 aa).

3 disordered regions span residues Met1–Arg188, Ser248–Glu280, and Val294–Thr320. Residues Met1–Gly326 lie on the Cytoplasmic side of the membrane. Residues Pro34 to Ile44 show a composition bias toward polar residues. Positions Pro61–Phe82 are enriched in low complexity. Residues Ala100–Gln111 show a composition bias toward polar residues. Residues Asp134–Ile146 show a composition bias toward basic and acidic residues. A compositionally biased stretch (polar residues) spans Asn147–Asp163. Low complexity predominate over residues Thr253–Pro267. The span at Pro307–Thr320 shows a compositional bias: basic and acidic residues. The chain crosses the membrane as a helical span at residues Pro327–Leu347. Topologically, residues Arg348–Lys364 are extracellular. Residues Met365–Phe385 form a helical membrane-spanning segment. Topologically, residues Thr386 to Leu624 are cytoplasmic. A helical transmembrane segment spans residues Val625–Ile645. Residues Ser646–Thr1176 are Extracellular-facing. A glycan (N-linked (GlcNAc...) asparagine) is linked at Asn654. The tract at residues Gly729 to Pro767 is disordered. Positions Pro742 to Ser752 are enriched in low complexity. N-linked (GlcNAc...) asparagine glycans are attached at residues Asn1015 and Asn1144. Residues Gly1177 to Leu1197 form a helical membrane-spanning segment. Topologically, residues Pro1198–Thr1202 are cytoplasmic. A helical transmembrane segment spans residues Pro1203–Val1223. Over Thr1224–Lys1227 the chain is Extracellular. Residues Ile1228–Leu1248 traverse the membrane as a helical segment. The Cytoplasmic segment spans residues Pro1249–Asp1609. Disordered regions lie at residues Pro1354–Ala1381 and Thr1399–Asp1609. Composition is skewed to polar residues over residues Asn1502–Glu1514 and Gly1530–Pro1552. Low complexity predominate over residues Ala1568–Ala1588.

This sequence belongs to the chitin synthase family. Class IV subfamily.

The protein localises to the cell membrane. The protein resides in the cytoplasmic vesicle membrane. It catalyses the reaction [(1-&gt;4)-N-acetyl-beta-D-glucosaminyl](n) + UDP-N-acetyl-alpha-D-glucosamine = [(1-&gt;4)-N-acetyl-beta-D-glucosaminyl](n+1) + UDP + H(+). Its function is as follows. Polymerizes chitin, a structural polymer of the cell wall and septum, by transferring the sugar moiety of UDP-GlcNAc to the non-reducing end of the growing chitin polymer. The polypeptide is Chitin synthase 5 (Mycosarcoma maydis (Corn smut fungus)).